A 603-amino-acid polypeptide reads, in one-letter code: O-acetyltransferase OatA (603 aa).

Transmembrane regions (helical) follow at residues 17 to 37, 45 to 65, 87 to 107, 148 to 168, 177 to 197, 211 to 231, 239 to 259, 268 to 288, 311 to 331, 333 to 353, and 382 to 402; these read YLPG…IYHL, GFLG…SLLI, LIPA…IFKP, LWSL…ITFL, IIQT…VIHF, TRLQ…PFAL, IVVS…TLFF, IYNG…AIAV, YSLY…YVQG, IPVY…EISY, and VLVI…FDAL. Active-site residues include Ser-453, Asp-575, and His-578.

The protein belongs to the acyltransferase 3 family. As to quaternary structure, monomer.

It is found in the cell membrane. Functionally, responsible for O-acetylation at the C(6)-hydroxyl group of N-acetylmuramyl residues, forming the corresponding N,6-O-diacetylmuramic acid of the peptidoglycan. O-acetylation of the peptidoglycan is the major determinant for lysozyme resistance. This is O-acetyltransferase OatA from Staphylococcus aureus (strain NCTC 8325 / PS 47).